A 554-amino-acid polypeptide reads, in one-letter code: CTP synthase (554 aa).

The amidoligase domain stretch occupies residues 1–265; that stretch reads MTPLIFVTGG…DELVIVQFKL (265 aa). CTP is bound at residue S13. S13 serves as a coordination point for UTP. ATP-binding positions include 14–19 and D71; that span reads SLGKGI. Mg(2+) is bound by residues D71 and E139. Residues 146 to 148, 186 to 191, and K222 contribute to the CTP site; these read DIE and KTKPTQ. UTP-binding positions include 186–191 and K222; that span reads KTKPTQ. The Glutamine amidotransferase type-1 domain occupies 292 to 545; it reads TIAVVGKYVD…VRAAREKKAG (254 aa). L-glutamine is bound at residue G353. The Nucleophile; for glutamine hydrolysis role is filled by C380. L-glutamine is bound by residues 381–384, E404, and R471; that span reads YGMQ. Catalysis depends on residues H518 and E520.

The protein belongs to the CTP synthase family. In terms of assembly, homotetramer.

It carries out the reaction UTP + L-glutamine + ATP + H2O = CTP + L-glutamate + ADP + phosphate + 2 H(+). It catalyses the reaction L-glutamine + H2O = L-glutamate + NH4(+). The enzyme catalyses UTP + NH4(+) + ATP = CTP + ADP + phosphate + 2 H(+). The protein operates within pyrimidine metabolism; CTP biosynthesis via de novo pathway; CTP from UDP: step 2/2. With respect to regulation, allosterically activated by GTP, when glutamine is the substrate; GTP has no effect on the reaction when ammonia is the substrate. The allosteric effector GTP functions by stabilizing the protein conformation that binds the tetrahedral intermediate(s) formed during glutamine hydrolysis. Inhibited by the product CTP, via allosteric rather than competitive inhibition. Functionally, catalyzes the ATP-dependent amination of UTP to CTP with either L-glutamine or ammonia as the source of nitrogen. Regulates intracellular CTP levels through interactions with the four ribonucleotide triphosphates. This Xanthomonas oryzae pv. oryzae (strain MAFF 311018) protein is CTP synthase.